The primary structure comprises 300 residues: HTH-type transcriptional regulator ArgP (300 aa).

In terms of domain architecture, HTH lysR-type spans 4 to 60 (PDYRTLQALDAVIRERGFERAAQKLCITQSAVSQRIKQLENLFGQPLLVRTVPPRPT). Positions 21-40 (FERAAQKLCITQSAVSQRIK) form a DNA-binding region, H-T-H motif.

Belongs to the LysR transcriptional regulatory family. In terms of assembly, homodimer.

Functionally, controls the transcription of genes involved in arginine and lysine metabolism. The chain is HTH-type transcriptional regulator ArgP from Photorhabdus laumondii subsp. laumondii (strain DSM 15139 / CIP 105565 / TT01) (Photorhabdus luminescens subsp. laumondii).